Consider the following 121-residue polypeptide: Large ribosomal subunit protein bL20 (121 aa).

This sequence belongs to the bacterial ribosomal protein bL20 family.

Its function is as follows. Binds directly to 23S ribosomal RNA and is necessary for the in vitro assembly process of the 50S ribosomal subunit. It is not involved in the protein synthesizing functions of that subunit. This chain is Large ribosomal subunit protein bL20, found in Polynucleobacter asymbioticus (strain DSM 18221 / CIP 109841 / QLW-P1DMWA-1) (Polynucleobacter necessarius subsp. asymbioticus).